We begin with the raw amino-acid sequence, 441 residues long: Arginine biosynthesis bifunctional protein ArgJ, mitochondrial (441 aa).

The transit peptide at 1 to 8 (MRISSTLL) directs the protein to the mitochondrion. The substrate site is built by Thr-177, Lys-204, Thr-215, Glu-301, Asn-436, and Ser-441. The active-site Nucleophile is the Thr-215.

The protein belongs to the ArgJ family. As to quaternary structure, heterodimer of an alpha and a beta chain. The alpha and beta chains are autoproteolytically processed from a single precursor protein within the mitochondrion.

The protein localises to the mitochondrion matrix. The enzyme catalyses N(2)-acetyl-L-ornithine + L-glutamate = N-acetyl-L-glutamate + L-ornithine. It carries out the reaction L-glutamate + acetyl-CoA = N-acetyl-L-glutamate + CoA + H(+). Its pathway is amino-acid biosynthesis; L-arginine biosynthesis; L-ornithine and N-acetyl-L-glutamate from L-glutamate and N(2)-acetyl-L-ornithine (cyclic): step 1/1. It participates in amino-acid biosynthesis; L-arginine biosynthesis; N(2)-acetyl-L-ornithine from L-glutamate: step 1/4. With respect to regulation, inhibited by ornithine. Its function is as follows. Catalyzes two activities which are involved in the cyclic version of arginine biosynthesis: the synthesis of acetylglutamate from glutamate and acetyl-CoA, and of ornithine by transacetylation between acetylornithine and glutamate. This chain is Arginine biosynthesis bifunctional protein ArgJ, mitochondrial, found in Saccharomyces cerevisiae (strain ATCC 204508 / S288c) (Baker's yeast).